Reading from the N-terminus, the 727-residue chain is Fatty acid oxidation complex subunit alpha (727 aa).

Residues 1–200 (MNDQQPFSAI…RQGLVDEAVP (200 aa)) are enoyl-CoA hydratase. The 3-hydroxyacyl-CoA dehydrogenase stretch occupies residues 316–727 (KPIHYVGILG…PPTDEDDSAS (412 aa)).

In the N-terminal section; belongs to the enoyl-CoA hydratase/isomerase family. This sequence in the central section; belongs to the 3-hydroxyacyl-CoA dehydrogenase family. In terms of assembly, heterotetramer of two alpha chains (FadJ) and two beta chains (FadI).

The protein localises to the cytoplasm. It catalyses the reaction a (3S)-3-hydroxyacyl-CoA = a (2E)-enoyl-CoA + H2O. The catalysed reaction is a 4-saturated-(3S)-3-hydroxyacyl-CoA = a (3E)-enoyl-CoA + H2O. The enzyme catalyses a (3S)-3-hydroxyacyl-CoA + NAD(+) = a 3-oxoacyl-CoA + NADH + H(+). It carries out the reaction (3S)-3-hydroxybutanoyl-CoA = (3R)-3-hydroxybutanoyl-CoA. Its pathway is lipid metabolism; fatty acid beta-oxidation. Its function is as follows. Catalyzes the formation of a hydroxyacyl-CoA by addition of water on enoyl-CoA. Also exhibits 3-hydroxyacyl-CoA epimerase and 3-hydroxyacyl-CoA dehydrogenase activities. This chain is Fatty acid oxidation complex subunit alpha, found in Pectobacterium carotovorum subsp. carotovorum (strain PC1).